An 81-amino-acid polypeptide reads, in one-letter code: 8.6 kDa transglutaminase substrate (81 aa).

Multimeric. As to expression, hemolymph; Hemocyte.

This chain is 8.6 kDa transglutaminase substrate, found in Tachypleus tridentatus (Japanese horseshoe crab).